The chain runs to 222 residues: Sigma non-opioid intracellular receptor 1 (222 aa).

The Lumenal segment spans residues 1–7; sequence MGVAGPW. A helical transmembrane segment spans residues 8–29; the sequence is VLRVGLGLGAFALLLQGLRGWL. The Cytoplasmic portion of the chain corresponds to 30-222; that stretch reads ACKRYEFQPA…ASAFFSTLGC (193 aa). The important for ligand-binding stretch occupies residues 98–105; it reads SLTEYVLL. Residues 176-222 form a C-terminal hydrophobic region region; it reads FVPSTLAFALADTLFSTQDFITLFYTLRAYTKGLLLEASAFFSTLGC.

The protein belongs to the ERG2 family. As to quaternary structure, homotrimer.

It localises to the nucleus inner membrane. Its subcellular location is the nucleus outer membrane. The protein localises to the nucleus envelope. It is found in the cytoplasmic vesicle. The protein resides in the endoplasmic reticulum membrane. It localises to the membrane. In terms of biological role, may function in lipid transport from the endoplasmic reticulum and be involved in a wide array of cellular functions probably through regulation of the biogenesis of lipid microdomains at the plasma membrane. May regulate calcium efflux at the endoplasmic reticulum. The chain is Sigma non-opioid intracellular receptor 1 (SIGMAR1) from Gallus gallus (Chicken).